The chain runs to 147 residues: Nucleoside diphosphate kinase (147 aa).

Residues K9, F57, R85, T91, R102, and N112 each contribute to the ATP site. Residue H115 is the Pros-phosphohistidine intermediate of the active site.

The protein belongs to the NDK family. As to quaternary structure, homotetramer. Mg(2+) is required as a cofactor.

Its subcellular location is the cytoplasm. The catalysed reaction is a 2'-deoxyribonucleoside 5'-diphosphate + ATP = a 2'-deoxyribonucleoside 5'-triphosphate + ADP. It catalyses the reaction a ribonucleoside 5'-diphosphate + ATP = a ribonucleoside 5'-triphosphate + ADP. Functionally, major role in the synthesis of nucleoside triphosphates other than ATP. The ATP gamma phosphate is transferred to the NDP beta phosphate via a ping-pong mechanism, using a phosphorylated active-site intermediate. This is Nucleoside diphosphate kinase from Listeria welshimeri serovar 6b (strain ATCC 35897 / DSM 20650 / CCUG 15529 / CIP 8149 / NCTC 11857 / SLCC 5334 / V8).